The sequence spans 705 residues: Voltage-dependent calcium channel beta subunit-associated regulatory protein (705 aa).

The Extracellular segment spans residues 1-45 (MQPTATMATAATTTTTTTATVALTTSWDNATGRPTAEPDPILDNY). The N-linked (GlcNAc...) asparagine glycan is linked to N29. Residues 46 to 66 (VLLVVVMSLFVGGTLVVLSGV) traverse the membrane as a helical; Signal-anchor for type III membrane protein segment. The Cytoplasmic segment spans residues 67-705 (LLLCKRCWDV…APTSPDHSPA (639 aa)). 2 disordered regions span residues 91-113 (TTTY…EDPE) and 212-284 (GKAL…GSGA). Over residues 245-254 (PSASSDSGEG) the composition is skewed to polar residues. The segment covering 267-284 (GGPGAAAGPGEAGPGSGA) has biased composition (gly residues). Phosphoserine is present on residues S299 and S304. Disordered stretches follow at residues 316-353 (PSQR…DAPQ), 369-436 (FPHP…SYRD), 448-540 (AAAS…RRDY), and 559-655 (HFDD…CPGS). Acidic residues predominate over residues 344–353 (TEQEEGDAPQ). Residues 371–382 (HPRPFLASPPPA) are compositionally biased toward pro residues. Residues 383–397 (LGRLEAAEAAGGASP) are compositionally biased toward low complexity. The span at 479-488 (AFPPPSPPAP) shows a compositional bias: pro residues. Residues 489–499 (RPKDGEARRLL) are compositionally biased toward basic and acidic residues. Phosphoserine is present on residues S507 and S528. A compositionally biased stretch (basic residues) spans 567–585 (ARHRARAHPHARKQWQRGR). Residues 591 to 614 (GARAAPALAGTPAPPAGAARPARA) show a composition bias toward low complexity. Residue S621 is modified to Phosphoserine. T698 carries the phosphothreonine modification. A phosphoserine mark is found at S699 and S703.

In terms of assembly, interacts with voltage-dependent calcium channels CACNB1, CACNB2, CACNB3 and CACNB4 beta subunits; prevents their interaction with the CACNA1C alpha subunit thereby negatively regulating the activity of the corresponding calcium channels.

It localises to the cytoplasmic vesicle. It is found in the secretory vesicle. Its subcellular location is the synaptic vesicle membrane. The protein localises to the cell membrane. The protein resides in the cell projection. It localises to the growth cone. Functionally, negatively regulates voltage-gated calcium channels by preventing the interaction between their alpha and beta subunits. Thereby, negatively regulates calcium channels activity at the plasma membrane and indirectly inhibits calcium-regulated exocytosis. In Homo sapiens (Human), this protein is Voltage-dependent calcium channel beta subunit-associated regulatory protein.